The primary structure comprises 428 residues: Spermidine/putrescine import ATP-binding protein PotA (428 aa).

The 233-residue stretch at 6–238 folds into the ABC transporter domain; the sequence is IEFKNVSKTY…PINHFVADFI (233 aa). Position 40 to 47 (40 to 47) interacts with ATP; it reads GASGSGKS.

Belongs to the ABC transporter superfamily. Spermidine/putrescine importer (TC 3.A.1.11.1) family. As to quaternary structure, the complex is composed of two ATP-binding proteins (PotA), two transmembrane proteins (PotB and PotC) and a solute-binding protein (PotD).

The protein resides in the cell membrane. The enzyme catalyses ATP + H2O + polyamine-[polyamine-binding protein]Side 1 = ADP + phosphate + polyamineSide 2 + [polyamine-binding protein]Side 1.. Its function is as follows. Part of the ABC transporter complex PotABCD involved in spermidine/putrescine import. Responsible for energy coupling to the transport system. The protein is Spermidine/putrescine import ATP-binding protein PotA of Lactococcus lactis subsp. lactis (strain IL1403) (Streptococcus lactis).